We begin with the raw amino-acid sequence, 359 residues long: Peptide chain release factor 1 (359 aa).

Gln235 carries the N5-methylglutamine modification. The segment at 280–306 (AERQRADSERSADRKSQVGSGDRSERI) is disordered.

It belongs to the prokaryotic/mitochondrial release factor family. Post-translationally, methylated by PrmC. Methylation increases the termination efficiency of RF1.

The protein localises to the cytoplasm. In terms of biological role, peptide chain release factor 1 directs the termination of translation in response to the peptide chain termination codons UAG and UAA. This is Peptide chain release factor 1 from Rhizobium johnstonii (strain DSM 114642 / LMG 32736 / 3841) (Rhizobium leguminosarum bv. viciae).